Reading from the N-terminus, the 600-residue chain is Probable tripeptidyl-peptidase SED4 (600 aa).

Positions 1-22 are cleaved as a signal peptide; that stretch reads MVSFTLRAIGACLIGLPALITA. The propeptide at 23 to 202 is removed in mature form; that stretch reads APTSHVSNDF…SVFTSDLEIT (180 aa). 2 N-linked (GlcNAc...) asparagine glycosylation sites follow: asparagine 210 and asparagine 281. The Peptidase S53 domain occupies 212–600; sequence TITPDCIREL…FEKLSKLVLI (389 aa). Active-site charge relay system residues include glutamate 288 and aspartate 292. N-linked (GlcNAc...) asparagine glycans are attached at residues asparagine 323 and asparagine 404. Residue serine 504 is the Charge relay system of the active site. Ca(2+) contacts are provided by aspartate 546 and isoleucine 547. An N-linked (GlcNAc...) asparagine glycan is attached at asparagine 575. Ca(2+)-binding residues include glycine 579 and aspartate 581.

Requires Ca(2+) as cofactor.

Its subcellular location is the secreted. The protein localises to the extracellular space. The catalysed reaction is Release of an N-terminal tripeptide from a polypeptide.. Its function is as follows. Secreted tripeptidyl-peptidase which degrades proteins at acidic pHs and is involved in virulence. This chain is Probable tripeptidyl-peptidase SED4 (SED4), found in Arthroderma benhamiae (strain ATCC MYA-4681 / CBS 112371) (Trichophyton mentagrophytes).